Consider the following 206-residue polypeptide: Small ribosomal subunit protein uS4 (206 aa).

A disordered region spans residues 18–46 (NIWGRPKSPVNRREYGPGQHGQRRKQKMS). The 61-residue stretch at 94–154 (RRLDAVVYRA…EKSRQMAALL (61 aa)) folds into the S4 RNA-binding domain.

The protein belongs to the universal ribosomal protein uS4 family. Part of the 30S ribosomal subunit. Contacts protein S5. The interaction surface between S4 and S5 is involved in control of translational fidelity.

Its function is as follows. One of the primary rRNA binding proteins, it binds directly to 16S rRNA where it nucleates assembly of the body of the 30S subunit. Functionally, with S5 and S12 plays an important role in translational accuracy. The chain is Small ribosomal subunit protein uS4 from Dinoroseobacter shibae (strain DSM 16493 / NCIMB 14021 / DFL 12).